The following is a 154-amino-acid chain: Transcriptional repressor NrdR (154 aa).

The segment at 3–34 is a zinc-finger region; sequence CPFCSAHDTKVIDSRLVAEGDQVRRRRECQAC. In terms of domain architecture, ATP-cone spans 49 to 139; sequence PRVIKQDGSR…VYRRFQDLNE (91 aa).

Belongs to the NrdR family. Requires Zn(2+) as cofactor.

Functionally, negatively regulates transcription of bacterial ribonucleotide reductase nrd genes and operons by binding to NrdR-boxes. This Azotobacter vinelandii (strain DJ / ATCC BAA-1303) protein is Transcriptional repressor NrdR.